We begin with the raw amino-acid sequence, 381 residues long: Alkanesulfonate monooxygenase (381 aa).

Belongs to the SsuD family. Homotetramer.

The enzyme catalyses an alkanesulfonate + FMNH2 + O2 = an aldehyde + FMN + sulfite + H2O + 2 H(+). Its function is as follows. Catalyzes the desulfonation of aliphatic sulfonates. This chain is Alkanesulfonate monooxygenase, found in Escherichia coli (strain SE11).